Here is a 287-residue protein sequence, read N- to C-terminus: uncharacterized protein (287 aa).

Residues 1 to 44 form a disordered region; the sequence is MAAPRNLTGDGGARQLVKDEESPAASSAAKGLLNDDSPTGKRTK. A Phosphoserine modification is found at Ser-37. Helical transmembrane passes span 55–75, 124–144, 147–167, 218–238, and 260–280; these read FAVF…IYLT, TFMI…FGVV, FVLV…LSKL, PIVD…LMPA, and DFKT…PALL.

It localises to the membrane. This is an uncharacterized protein from Arabidopsis thaliana (Mouse-ear cress).